The following is a 1180-amino-acid chain: Phosphatidylinositol 4-kinase (1180 aa).

One can recognise a PIK helical domain in the interval 1-206 (MNKISDTIII…SVYLHSPSTS (206 aa)). Disordered stretches follow at residues 15 to 84 (NEDE…KHKE), 257 to 327 (ENDH…ENDN), 355 to 391 (TSPIKDDMENNNNNNNNNNNNNNNNNNNNNINNNNIN), 768 to 799 (TISNSSDSCTTETTTTSPVATSPTLPINIPHS), and 832 to 894 (AISP…SPFG). Residues 38-74 (NNNNNNILTNVNNNKNNTITSSGGSDSSSSSSNNNNN) are compositionally biased toward low complexity. Basic residues predominate over residues 75–84 (KIKKSKKHKE). Residues 257 to 270 (ENDHHIENDPKKDI) show a composition bias toward basic and acidic residues. Composition is skewed to low complexity over residues 271–325 (NSNN…SGEN), 364–391 (NNNNNNNNNNNNNNNNNNNNNINNNNIN), 768–793 (TISNSSDSCTTETTTTSPVATSPTLP), and 835–879 (PPSQ…SPTN). One can recognise a PI3K/PI4K catalytic domain in the interval 895–1164 (ESWQEKIERY…LISYSIDHFK (270 aa)). The segment at 901–907 (IERYKKI) is G-loop. The segment at 1030 to 1038 (QIKDRHNGN) is catalytic loop. An activation loop region spans residues 1049–1073 (HIDFGFILSNSPGNISFESAPFKLT).

The protein belongs to the PI3/PI4-kinase family. Type III PI4K subfamily.

The enzyme catalyses a 1,2-diacyl-sn-glycero-3-phospho-(1D-myo-inositol) + ATP = a 1,2-diacyl-sn-glycero-3-phospho-(1D-myo-inositol 4-phosphate) + ADP + H(+). Its function is as follows. Acts on phosphatidylinositol (PtdIns) in the first committed step in the production of the second messenger inositol-1,4,5,-trisphosphate. The sequence is that of Phosphatidylinositol 4-kinase (pikD) from Dictyostelium discoideum (Social amoeba).